The chain runs to 156 residues: Small ribosomal subunit protein uS7 (156 aa).

Belongs to the universal ribosomal protein uS7 family. In terms of assembly, part of the 30S ribosomal subunit. Contacts proteins S9 and S11.

Functionally, one of the primary rRNA binding proteins, it binds directly to 16S rRNA where it nucleates assembly of the head domain of the 30S subunit. Is located at the subunit interface close to the decoding center, probably blocks exit of the E-site tRNA. This is Small ribosomal subunit protein uS7 from Frankia casuarinae (strain DSM 45818 / CECT 9043 / HFP020203 / CcI3).